Here is a 440-residue protein sequence, read N- to C-terminus: Phosphatidylcholine-sterol acyltransferase (440 aa).

Positions 1-24 (MGPPGSPWQWVPLLLGLLLPPAAP) are cleaved as a signal peptide. Asn44 is a glycosylation site (N-linked (GlcNAc...) asparagine). Cys74 and Cys98 are disulfide-bonded. N-linked (GlcNAc...) asparagine glycosylation is present at Asn108. Ser205 acts as the Nucleophile in catalysis. N-linked (GlcNAc...) asparagine glycosylation occurs at Asn296. A disulfide bond links Cys337 and Cys380. Residues Asp369 and His401 each act as charge relay system in the active site. The N-linked (GlcNAc...) asparagine glycan is linked to Asn408.

The protein belongs to the AB hydrolase superfamily. Lipase family. In terms of tissue distribution, most abundant in liver and cerebellum.

It is found in the secreted. The catalysed reaction is a sterol + a 1,2-diacyl-sn-glycero-3-phosphocholine = a sterol ester + a 1-acyl-sn-glycero-3-phosphocholine. APOA1 is the most potent activator in plasma. Also activated by APOE, APOC1 and APOA4. Its function is as follows. Central enzyme in the extracellular metabolism of plasma lipoproteins. Synthesized mainly in the liver and secreted into plasma where it converts cholesterol and phosphatidylcholines (lecithins) to cholesteryl esters and lysophosphatidylcholines on the surface of high and low density lipoproteins (HDLs and LDLs). The cholesterol ester is then transported back to the liver. Has a preference for plasma 16:0-18:2 or 18:O-18:2 phosphatidylcholines. Also produced in the brain by primary astrocytes, and esterifies free cholesterol on nascent APOE-containing lipoproteins secreted from glia and influences cerebral spinal fluid (CSF) APOE- and APOA1 levels. Together with APOE and the cholesterol transporter ABCA1, plays a key role in the maturation of glial-derived, nascent lipoproteins. Required for remodeling high-density lipoprotein particles into their spherical forms. The sequence is that of Phosphatidylcholine-sterol acyltransferase (LCAT) from Papio anubis (Olive baboon).